The primary structure comprises 184 residues: ADP-ribosylation factor-like protein 8b (184 aa).

The segment at residues 1–18 is an intramembrane region (note=Mediates targeting to membranes); it reads MGLWDALLNWLRSLFFKQ. GTP-binding positions include 29–34, 48–51, 70–74, and 129–132; these read NAGKTS, MIPT, DLGGQ, and NKID.

Belongs to the small GTPase superfamily. Arf family. Interacts with tubulin.

It localises to the late endosome membrane. The protein localises to the lysosome membrane. The protein resides in the cytoplasm. Its subcellular location is the cytoskeleton. It is found in the spindle. Its function is as follows. May play a role in lysosome motility. May play a role in chromosome segregation. In terms of biological role, (Microbial infection) Component of tomato mosaic virus (ToMV) RNA replication complexes. Required for tobamovirus multiplication, especially for efficient negative-strand RNA synthesis and viral RNA capping. The polypeptide is ADP-ribosylation factor-like protein 8b (Arabidopsis thaliana (Mouse-ear cress)).